A 439-amino-acid chain; its full sequence is 23S rRNA (uracil(1939)-C(5))-methyltransferase RlmD (439 aa).

In terms of domain architecture, TRAM spans 10–69 (KTQLNTRHQAVQVERLDHHGAGIAYLKKKPLFIDGALPGEEVVTQLVEEKSKFARGKLIK). Residues cysteine 82, cysteine 88, cysteine 91, and cysteine 169 each coordinate [4Fe-4S] cluster. The S-adenosyl-L-methionine site is built by glutamine 272, phenylalanine 301, asparagine 306, glutamate 322, asparagine 349, and aspartate 370. The Nucleophile role is filled by cysteine 396.

The protein belongs to the class I-like SAM-binding methyltransferase superfamily. RNA M5U methyltransferase family. RlmD subfamily.

The catalysed reaction is uridine(1939) in 23S rRNA + S-adenosyl-L-methionine = 5-methyluridine(1939) in 23S rRNA + S-adenosyl-L-homocysteine + H(+). Catalyzes the formation of 5-methyl-uridine at position 1939 (m5U1939) in 23S rRNA. This is 23S rRNA (uracil(1939)-C(5))-methyltransferase RlmD from Vibrio parahaemolyticus serotype O3:K6 (strain RIMD 2210633).